A 260-amino-acid chain; its full sequence is Hydroxyethylthiazole kinase (260 aa).

Residue methionine 36 participates in substrate binding. ATP is bound by residues arginine 112 and threonine 157. Glycine 184 lines the substrate pocket.

The protein belongs to the Thz kinase family. Mg(2+) is required as a cofactor.

The catalysed reaction is 5-(2-hydroxyethyl)-4-methylthiazole + ATP = 4-methyl-5-(2-phosphooxyethyl)-thiazole + ADP + H(+). Its pathway is cofactor biosynthesis; thiamine diphosphate biosynthesis; 4-methyl-5-(2-phosphoethyl)-thiazole from 5-(2-hydroxyethyl)-4-methylthiazole: step 1/1. Functionally, catalyzes the phosphorylation of the hydroxyl group of 4-methyl-5-beta-hydroxyethylthiazole (THZ). The sequence is that of Hydroxyethylthiazole kinase from Shouchella clausii (strain KSM-K16) (Alkalihalobacillus clausii).